Consider the following 350-residue polypeptide: Protein RecA (350 aa).

An ATP-binding site is contributed by 65–72; it reads GPESSGKT.

Belongs to the RecA family.

Its subcellular location is the cytoplasm. Can catalyze the hydrolysis of ATP in the presence of single-stranded DNA, the ATP-dependent uptake of single-stranded DNA by duplex DNA, and the ATP-dependent hybridization of homologous single-stranded DNAs. It interacts with LexA causing its activation and leading to its autocatalytic cleavage. This Nautilia profundicola (strain ATCC BAA-1463 / DSM 18972 / AmH) protein is Protein RecA.